The chain runs to 89 residues: Putative regulatory protein CLL_A1210 (89 aa).

This sequence belongs to the RemA family.

The chain is Putative regulatory protein CLL_A1210 from Clostridium botulinum (strain Eklund 17B / Type B).